A 198-amino-acid chain; its full sequence is Peptidyl-tRNA hydrolase (198 aa).

A tRNA-binding site is contributed by Tyr18. The active-site Proton acceptor is His23. Residues Tyr69, Asn71, and Asn117 each contribute to the tRNA site.

The protein belongs to the PTH family. Monomer.

It localises to the cytoplasm. It catalyses the reaction an N-acyl-L-alpha-aminoacyl-tRNA + H2O = an N-acyl-L-amino acid + a tRNA + H(+). In terms of biological role, hydrolyzes ribosome-free peptidyl-tRNAs (with 1 or more amino acids incorporated), which drop off the ribosome during protein synthesis, or as a result of ribosome stalling. Catalyzes the release of premature peptidyl moieties from peptidyl-tRNA molecules trapped in stalled 50S ribosomal subunits, and thus maintains levels of free tRNAs and 50S ribosomes. This Aeromonas hydrophila subsp. hydrophila (strain ATCC 7966 / DSM 30187 / BCRC 13018 / CCUG 14551 / JCM 1027 / KCTC 2358 / NCIMB 9240 / NCTC 8049) protein is Peptidyl-tRNA hydrolase.